We begin with the raw amino-acid sequence, 233 residues long: Rab-like protein 3 (233 aa).

Residues 1 to 233 (MASLDRVKVL…RFNFKSLHSD (233 aa)) form a small GTPase-like region. Residues 16–21 (GVGKSS), 148–150 (KFD), and 179–180 (DC) contribute to the GTP site.

Belongs to the small GTPase superfamily. Rab family. Homodimer.

Required for KRAS signaling regulation and modulation of cell proliferation. Regulator of KRAS prenylation, and probably prenylation of other small GTPases. Required for lymphocyte development and function. Not required for myeloid cell development. The protein is Rab-like protein 3 (rabl3) of Danio rerio (Zebrafish).